Consider the following 250-residue polypeptide: Entry-fusion complex associated protein OPG095 (250 aa).

Residue Gly-2 is the site of N-myristoyl glycine; by host attachment. Positions 2–12 (GAAASIQTTVN) are targeting to MV membrane. The Virion surface portion of the chain corresponds to 2–183 (GAAASIQTTV…IAPKQVAGTG (182 aa)). Intrachain disulfides connect Cys-34–Cys-57, Cys-49–Cys-136, and Cys-116–Cys-158. Residues 184–204 (VQFYMIVIGVIILAALFMYYA) traverse the membrane as a helical segment. Residues 205 to 250 (KRMLFTSTNDKIKLILANKENVHWTTYMDTFFRTSPMVIATTDMQN) lie on the Intravirion side of the membrane.

It belongs to the orthopoxvirus OPG095 family. In terms of assembly, component of the entry fusion complex (EFC) composed of OPG053/F9, OPG076/O3, OPG086/G3, OPG094/G9, OPG095/L1, OPG099/L5, OPG107/H2, OPG143/A16, OPG104/J5, OPG147/A21 and OPG155/A28. Except for OPG095/L1 and OPG053/F9, each of the EFC proteins is required for assembly or stability of the complex. In terms of processing, myristoylated. Disulfid bonds are oxidized in the cytoplasm by OPG088 protein. Post-translationally, unglycosylated because produced in viral factories instead of the classic ER -Golgi route.

Its subcellular location is the virion membrane. Functionally, component of the entry fusion complex (EFC), which consists of 11 proteins. During cell infection, this complex mediates entry of the virion core into the host cytoplasm by a two-step mechanism consisting of lipid mixing of the viral and cellular membranes and subsequent pore formation. The chain is Entry-fusion complex associated protein OPG095 (OPG099) from Bos taurus (Bovine).